A 419-amino-acid chain; its full sequence is tRNA(Ile)-lysidine synthase (419 aa).

S31–S36 serves as a coordination point for ATP.

Belongs to the tRNA(Ile)-lysidine synthase family.

The protein resides in the cytoplasm. It catalyses the reaction cytidine(34) in tRNA(Ile2) + L-lysine + ATP = lysidine(34) in tRNA(Ile2) + AMP + diphosphate + H(+). Functionally, ligates lysine onto the cytidine present at position 34 of the AUA codon-specific tRNA(Ile) that contains the anticodon CAU, in an ATP-dependent manner. Cytidine is converted to lysidine, thus changing the amino acid specificity of the tRNA from methionine to isoleucine. This is tRNA(Ile)-lysidine synthase from Ruegeria pomeroyi (strain ATCC 700808 / DSM 15171 / DSS-3) (Silicibacter pomeroyi).